The primary structure comprises 156 residues: Small ribosomal subunit protein uS7 (156 aa).

This sequence belongs to the universal ribosomal protein uS7 family. In terms of assembly, part of the 30S ribosomal subunit. Contacts proteins S9 and S11.

One of the primary rRNA binding proteins, it binds directly to 16S rRNA where it nucleates assembly of the head domain of the 30S subunit. Is located at the subunit interface close to the decoding center, probably blocks exit of the E-site tRNA. This chain is Small ribosomal subunit protein uS7, found in Prochlorococcus marinus (strain MIT 9303).